The chain runs to 270 residues: Release factor glutamine methyltransferase (270 aa).

Residues 112–116 (GTGSG), D135, W162, and N178 contribute to the S-adenosyl-L-methionine site. 178–181 (NPPY) contributes to the substrate binding site.

The protein belongs to the protein N5-glutamine methyltransferase family. PrmC subfamily.

The enzyme catalyses L-glutaminyl-[peptide chain release factor] + S-adenosyl-L-methionine = N(5)-methyl-L-glutaminyl-[peptide chain release factor] + S-adenosyl-L-homocysteine + H(+). Methylates the class 1 translation termination release factors RF1/PrfA and RF2/PrfB on the glutamine residue of the universally conserved GGQ motif. The chain is Release factor glutamine methyltransferase from Bordetella pertussis (strain Tohama I / ATCC BAA-589 / NCTC 13251).